Consider the following 263-residue polypeptide: HTH-type transcriptional repressor NanR (263 aa).

The segment at 1 to 24 (MSPMNAFDSQTEDSSPAIGRNLRS) is disordered. The region spanning 30–98 (KKLSEMVEEE…NGERARVSRP (69 aa)) is the HTH gntR-type domain. The H-T-H motif DNA-binding region spans 58–77 (ERELMAFFNVGRPSVREALA).

The protein belongs to the NanR family.

Functionally, transcriptional repressor that controls expression of the genes required for the catabolism of sialic acids. The protein is HTH-type transcriptional repressor NanR of Escherichia coli O127:H6 (strain E2348/69 / EPEC).